We begin with the raw amino-acid sequence, 231 residues long: MDQSIQVNINEVNQALERKDSLDVIKWAYKTYGDKLVYACSMGAEGMVLIDLISKVRPDAPVIFLDTDFHFSETYELIERVKERYPKLQLKLVKPELTPEEQAETYGDRLWERQPDLCCKLRKLVPLEKELAQYDAWMSGLRRDQSPTRTNTQFVNEDRRFGSTKICPLIHWTSEEIWMYIELHQLPYNDLHDKQYPSIGCEYCTRPVKEGEDERAGRWSNTSKTECGLHQ.

[4Fe-4S] cluster-binding residues include C118, C119, C201, and C204. C227 serves as the catalytic Nucleophile; cysteine thiosulfonate intermediate.

Belongs to the PAPS reductase family. CysH subfamily. It depends on [4Fe-4S] cluster as a cofactor.

Its subcellular location is the cytoplasm. It carries out the reaction [thioredoxin]-disulfide + sulfite + AMP + 2 H(+) = adenosine 5'-phosphosulfate + [thioredoxin]-dithiol. It functions in the pathway sulfur metabolism; hydrogen sulfide biosynthesis; sulfite from sulfate. In terms of biological role, catalyzes the formation of sulfite from adenosine 5'-phosphosulfate (APS) using thioredoxin as an electron donor. The chain is Adenosine 5'-phosphosulfate reductase from Halalkalibacterium halodurans (strain ATCC BAA-125 / DSM 18197 / FERM 7344 / JCM 9153 / C-125) (Bacillus halodurans).